Consider the following 177-residue polypeptide: Large ribosomal subunit protein uL6 (177 aa).

This sequence belongs to the universal ribosomal protein uL6 family. In terms of assembly, part of the 50S ribosomal subunit.

In terms of biological role, this protein binds to the 23S rRNA, and is important in its secondary structure. It is located near the subunit interface in the base of the L7/L12 stalk, and near the tRNA binding site of the peptidyltransferase center. This chain is Large ribosomal subunit protein uL6, found in Rickettsia massiliae (strain Mtu5).